The chain runs to 350 residues: Ferredoxin--NADP reductase (350 aa).

FAD is bound by residues threonine 22, glutamate 41, glutamine 49, tyrosine 54, valine 94, phenylalanine 129, aspartate 295, and serine 336.

This sequence belongs to the ferredoxin--NADP reductase type 2 family. As to quaternary structure, homodimer. FAD is required as a cofactor.

It carries out the reaction 2 reduced [2Fe-2S]-[ferredoxin] + NADP(+) + H(+) = 2 oxidized [2Fe-2S]-[ferredoxin] + NADPH. The chain is Ferredoxin--NADP reductase from Chlorobium luteolum (strain DSM 273 / BCRC 81028 / 2530) (Pelodictyon luteolum).